Consider the following 120-residue polypeptide: Small ribosomal subunit protein uS13 (120 aa).

Residues 97-120 are disordered; the sequence is PVRGQRTKTNARTRKGKKKTVGAK.

Belongs to the universal ribosomal protein uS13 family. In terms of assembly, part of the 30S ribosomal subunit. Forms a loose heterodimer with protein S19. Forms two bridges to the 50S subunit in the 70S ribosome.

Located at the top of the head of the 30S subunit, it contacts several helices of the 16S rRNA. In the 70S ribosome it contacts the 23S rRNA (bridge B1a) and protein L5 of the 50S subunit (bridge B1b), connecting the 2 subunits; these bridges are implicated in subunit movement. Contacts the tRNAs in the A and P-sites. The polypeptide is Small ribosomal subunit protein uS13 (Nitratiruptor sp. (strain SB155-2)).